A 570-amino-acid chain; its full sequence is Apyrase (570 aa).

A signal peptide spans 1–23 (MALVRFATIITVLCHLAIQDGAA). A divalent metal cation contacts are provided by aspartate 43, histidine 45, and aspartate 94. Asparagine 108 carries N-linked (GlcNAc...) asparagine glycosylation. A divalent metal cation contacts are provided by asparagine 126, histidine 229, and histidine 253. N-linked (GlcNAc...) asparagine glycans are attached at residues asparagine 287 and asparagine 326. Position 367 (arginine 367) interacts with AMP. A glycan (N-linked (GlcNAc...) asparagine) is linked at asparagine 387. Residues arginine 402 and aspartate 507 each contribute to the AMP site. Asparagine 552 and asparagine 555 each carry an N-linked (GlcNAc...) asparagine glycan.

The protein belongs to the 5'-nucleotidase family. As to quaternary structure, interacts with human PLAT; the interaction results in PLAT activation probably via an allosteric activation mechanism. A divalent metal cation is required as a cofactor. As to expression, saliva (at protein level). Salivary gland (at protein level). Not detected in midgut.

The protein localises to the secreted. The catalysed reaction is a ribonucleoside 5'-triphosphate + 2 H2O = a ribonucleoside 5'-phosphate + 2 phosphate + 2 H(+). Its function is as follows. Cleaves adenosine triphosphate (ATP) and adenosine diphosphate (ADP) to adenosine monophosphate (AMP) and inorganic phosphate. Enhances fibrin degradation in the midgut blood bolus. Activates human tissue plasminogen activator (PLAT), probably via an allosteric activation mechanism. Inhibits ADP-mediated host platelet aggregation in vitro and in mosquito midgut. Inhibits host neutrophil activation in the mosquito midgut: reduces neutrophil extracellular traps formation in the presence of platelets and the formation of total cell- and mitochondrial-derived reactive oxygen species. Functionally, (Microbial infection) Promotes Plasmodium berghei parasite transmission from the mammalian host to the mosquito probably by reducing the blood bolus viscosity. Facilitates sporozoite transmission from the mosquito to the mammalian host during blood feeding. This chain is Apyrase, found in Anopheles gambiae (African malaria mosquito).